A 447-amino-acid chain; its full sequence is SPARC-related modular calcium-binding protein 2 (447 aa).

Positions 1–21 (MLPPQLCWLPLLAALLPPVPA) are cleaved as a signal peptide. In terms of domain architecture, Kazal-like spans 34-86 (QDKDRDCSLDCPSSPQKPLCASDGRTFLSRCEFQRAKCKDPQLEIAHRGNCKD). Cystine bridges form between Cys40/Cys71, Cys44/Cys64, Cys53/Cys84, Cys90/Cys113, Cys124/Cys131, and Cys133/Cys153. The 67-residue stretch at 87–153 (VSRCVAERKY…TAVAHKTPRC (67 aa)) folds into the Thyroglobulin type-1 1 domain. Positions 147–230 (AHKTPRCPGS…QSALEEAKQP (84 aa)) are disordered. Over residues 161 to 172 (VPQREGAGKADD) the composition is skewed to basic and acidic residues. Asn206 carries N-linked (GlcNAc...) asparagine glycosylation. Residues 206–216 (NKTNKNSASSC) are compositionally biased toward polar residues. One can recognise a Thyroglobulin type-1 2 domain in the interval 213-281 (ASSCDQEHQS…TSTRYEQPKC (69 aa)). Disulfide bonds link Cys216–Cys240, Cys251–Cys258, and Cys260–Cys281. The span at 217–230 (DQEHQSALEEAKQP) shows a compositional bias: basic and acidic residues. EF-hand domains follow at residues 347–382 (LEER…LRKK) and 384–419 (KPKK…TREE). Asp360, Asn362, Ser364, Asp366, Glu371, Asp397, Asn399, Asp401, Ser403, and Glu408 together coordinate Ca(2+). A glycan (N-linked (GlcNAc...) asparagine) is linked at Asn362. The segment at 416–447 (TREEGKANTRKRHTPRGNAESSSSNRQPRKQG) is disordered.

In terms of assembly, binds various proteins from the extracellular matrix. Post-translationally, N-glycosylated. As to expression, strongly expressed in ovary, followed by heart, muscle, spleen, brain, thymus, lung, liver, kidney, spleen, testis, ovary and skeletal muscle.

The protein resides in the secreted. It localises to the extracellular space. Its subcellular location is the extracellular matrix. It is found in the basement membrane. In terms of biological role, can stimulate endothelial cell proliferation, migration, as well as angiogenesis. Promotes matrix assembly and cell adhesiveness. In Mus musculus (Mouse), this protein is SPARC-related modular calcium-binding protein 2 (Smoc2).